The chain runs to 391 residues: MFDWVGLLLKVLYYYGQIIGLINFEIDWQRGRVVAAQRGILFAIAINVLICMVLLLQISKKFNLDVYFGRANQLHQYVIIVMVSLRMASGISAILNRWRQRAQLMRLVECVLRLFLKKPHVKQMSRWAILVKFSVGVVSNFLQMAISMESLDRLGFNEFVGMASDFWMSAIINMAISQHYLVILFVRAYYHLLKTEVRQAIHESQMLSEIYPRRAAFMTKCCYLADRIDNIAKLQNQLQSIVTQLNQVFGIQGIMVYGGYYIFSVATTYITYSLAINGIEELHLSVRAAALVFSWFLFYYTSAILNLFVMLKLFDDHKEMERILEERTLFTSALDVRLEQSFESIQLQLIRNPLKIEVLDIFTITRSSSAAMIGSIITNSIFLIQYDMEYF.

The Cytoplasmic segment spans residues 1-3 (MFD). Residues 4–24 (WVGLLLKVLYYYGQIIGLINF) form a helical membrane-spanning segment. Over 25 to 38 (EIDWQRGRVVAAQR) the chain is Extracellular. Residues 39 to 59 (GILFAIAINVLICMVLLLQIS) form a helical membrane-spanning segment. Residues 60 to 73 (KKFNLDVYFGRANQ) are Cytoplasmic-facing. A helical transmembrane segment spans residues 74–94 (LHQYVIIVMVSLRMASGISAI). Residues 95–126 (LNRWRQRAQLMRLVECVLRLFLKKPHVKQMSR) lie on the Extracellular side of the membrane. The chain crosses the membrane as a helical span at residues 127–147 (WAILVKFSVGVVSNFLQMAIS). Residues 148–165 (MESLDRLGFNEFVGMASD) are Cytoplasmic-facing. A helical transmembrane segment spans residues 166 to 186 (FWMSAIINMAISQHYLVILFV). Topologically, residues 187-247 (RAYYHLLKTE…LQSIVTQLNQ (61 aa)) are extracellular. The chain crosses the membrane as a helical span at residues 248 to 268 (VFGIQGIMVYGGYYIFSVATT). The Cytoplasmic portion of the chain corresponds to 269 to 290 (YITYSLAINGIEELHLSVRAAA). Residues 291–311 (LVFSWFLFYYTSAILNLFVML) form a helical membrane-spanning segment. Over 312–391 (KLFDDHKEME…FLIQYDMEYF (80 aa)) the chain is Extracellular.

This sequence belongs to the insect chemoreceptor superfamily. Gustatory receptor (GR) family. Gr22e subfamily.

Its subcellular location is the cell membrane. Probable gustatory receptor which mediates acceptance or avoidance behavior, depending on its substrates. The sequence is that of Putative gustatory receptor 36a (Gr36a) from Drosophila melanogaster (Fruit fly).